The chain runs to 334 residues: Malate dehydrogenase (334 aa).

17 to 23 (GAAGQIG) lines the NAD(+) pocket. Substrate-binding residues include arginine 98 and arginine 104. NAD(+)-binding positions include asparagine 111, glutamine 118, and 135–137 (VGN). 2 residues coordinate substrate: asparagine 137 and arginine 168. The active-site Proton acceptor is the histidine 193.

Belongs to the LDH/MDH superfamily. MDH type 2 family.

The enzyme catalyses (S)-malate + NAD(+) = oxaloacetate + NADH + H(+). Catalyzes the reversible oxidation of malate to oxaloacetate. This chain is Malate dehydrogenase, found in Deinococcus geothermalis (strain DSM 11300 / CIP 105573 / AG-3a).